A 231-amino-acid polypeptide reads, in one-letter code: MLMFTAIQRGVWVALLWPHLLTASMPLDCREENGNLSRCPTISQEKLLDRVIQHAELIYRVSEESCSLFEEMFVPFPLQLQRNQAGFTCITKALAIPSSKSEIQQISDKWLLHSVLMLVQSWIEPLVYLQNTLDRYDGAPDMLLNKTKWVSEKLISLEQGVVVLIKKMLDEGMATTAYNEQSLFQDDAQPDMLESVMRDYTLLSCFKKDAHKMEILLKLLKCRQNDIYSCA.

The first 24 residues, 1–24 (MLMFTAIQRGVWVALLWPHLLTAS), serve as a signal peptide directing secretion. 3 disulfides stabilise this stretch: C29-C39, C89-C205, and C222-C230. N35 and N145 each carry an N-linked (GlcNAc...) asparagine glycan.

It belongs to the somatotropin/prolactin family. In terms of tissue distribution, pituitary gland.

The protein localises to the secreted. This is Somatolactin from Siganus guttatus (Orange-spotted spinefoot).